Here is a 250-residue protein sequence, read N- to C-terminus: ATP synthase subunit a (250 aa).

The next 6 membrane-spanning stretches (helical) occupy residues 26–46 (FTNASLFMAASAAVAAGFLYF), 84–104 (FFPLVFSLFMFVLTANLLGMF), 114–134 (IIVTFALAILVISTVLIYGFY), 143–163 (VFVPSGVPGILLPLVVAIEII), 193–213 (FVASLGALGAVGVGGAVLPLI), and 216–236 (VALTGLEFLVAFLQAYVFAVL).

This sequence belongs to the ATPase A chain family. F-type ATPases have 2 components, CF(1) - the catalytic core - and CF(0) - the membrane proton channel. CF(1) has five subunits: alpha(3), beta(3), gamma(1), delta(1), epsilon(1). CF(0) has three main subunits: a(1), b(2) and c(9-12). The alpha and beta chains form an alternating ring which encloses part of the gamma chain. CF(1) is attached to CF(0) by a central stalk formed by the gamma and epsilon chains, while a peripheral stalk is formed by the delta and b chains.

The protein resides in the cell inner membrane. Key component of the proton channel; it plays a direct role in the translocation of protons across the membrane. The protein is ATP synthase subunit a of Rhizobium etli (strain ATCC 51251 / DSM 11541 / JCM 21823 / NBRC 15573 / CFN 42).